The primary structure comprises 408 residues: Acetylornithine/succinyldiaminopimelate aminotransferase (408 aa).

Pyridoxal 5'-phosphate contacts are provided by residues 108–109 and phenylalanine 141; that span reads GA. Residue arginine 144 participates in N(2)-acetyl-L-ornithine binding. 226–229 contacts pyridoxal 5'-phosphate; that stretch reads DEIQ. Position 255 is an N6-(pyridoxal phosphate)lysine (lysine 255). Threonine 283 serves as a coordination point for N(2)-acetyl-L-ornithine. Threonine 284 contacts pyridoxal 5'-phosphate.

This sequence belongs to the class-III pyridoxal-phosphate-dependent aminotransferase family. ArgD subfamily. As to quaternary structure, homodimer. It depends on pyridoxal 5'-phosphate as a cofactor.

The protein localises to the cytoplasm. It carries out the reaction N(2)-acetyl-L-ornithine + 2-oxoglutarate = N-acetyl-L-glutamate 5-semialdehyde + L-glutamate. It catalyses the reaction N-succinyl-(2S,6S)-2,6-diaminopimelate + 2-oxoglutarate = (S)-2-succinylamino-6-oxoheptanedioate + L-glutamate. The protein operates within amino-acid biosynthesis; L-arginine biosynthesis; N(2)-acetyl-L-ornithine from L-glutamate: step 4/4. Its pathway is amino-acid biosynthesis; L-lysine biosynthesis via DAP pathway; LL-2,6-diaminopimelate from (S)-tetrahydrodipicolinate (succinylase route): step 2/3. Involved in both the arginine and lysine biosynthetic pathways. This is Acetylornithine/succinyldiaminopimelate aminotransferase from Buchnera aphidicola subsp. Acyrthosiphon pisum (strain APS) (Acyrthosiphon pisum symbiotic bacterium).